A 948-amino-acid chain; its full sequence is RNA polymerase-associated protein RapA (948 aa).

The Helicase ATP-binding domain maps to 164 to 332; that stretch reads EVADRIAPRV…FARLRLLDPN (169 aa). 177–184 contacts ATP; it reads DEVGLGKT. Positions 278 to 281 match the DEAH box motif; it reads DEAH. In terms of domain architecture, Helicase C-terminal spans 473-627; the sequence is RVDWLIDTLK…TCPTGNALQH (155 aa).

This sequence belongs to the SNF2/RAD54 helicase family. RapA subfamily. In terms of assembly, interacts with the RNAP. Has a higher affinity for the core RNAP than for the holoenzyme. Its ATPase activity is stimulated by binding to RNAP.

Transcription regulator that activates transcription by stimulating RNA polymerase (RNAP) recycling in case of stress conditions such as supercoiled DNA or high salt concentrations. Probably acts by releasing the RNAP, when it is trapped or immobilized on tightly supercoiled DNA. Does not activate transcription on linear DNA. Probably not involved in DNA repair. This is RNA polymerase-associated protein RapA from Pseudomonas savastanoi pv. phaseolicola (strain 1448A / Race 6) (Pseudomonas syringae pv. phaseolicola (strain 1448A / Race 6)).